The sequence spans 138 residues: Small ribosomal subunit protein uS11c (138 aa).

It belongs to the universal ribosomal protein uS11 family. As to quaternary structure, part of the 30S ribosomal subunit.

Its subcellular location is the plastid. The protein resides in the chloroplast. The polypeptide is Small ribosomal subunit protein uS11c (Phaseolus vulgaris (Kidney bean)).